The primary structure comprises 354 residues: MASYTLAELAARVGGAVEGDGSLRLDGIAPLEEASASEISFFSNRKYRKAFEASRAGAVVVEPREQVPAGRTVLRVANAYLAFAKISTLFHPPREAVPEVAPTAVIHPTARVHPSAQVMPLACVGPDAQVGARSILFPGVHVADGARVGEDCVLYHNVVVRERCAVGNRVILQPGCVIGSDGFGFAFDPEGEGKGPRHYKVPQVGNVVVEDDVELGANTCVDRATLGTTRIGRGAKIDNLVQIAHNVQVGPLSLLVSQVGVAGSTKLGMGVVAGGQAGIVGHLEIGDGVRIGAQSGVMADVQAGETVSGSPAVPHGGWLKAMASLEHLHDMRKELRELRREVERLRADAGEDEP.

Catalysis depends on His-245, which acts as the Proton acceptor.

It belongs to the transferase hexapeptide repeat family. LpxD subfamily. As to quaternary structure, homotrimer.

The enzyme catalyses a UDP-3-O-[(3R)-3-hydroxyacyl]-alpha-D-glucosamine + a (3R)-hydroxyacyl-[ACP] = a UDP-2-N,3-O-bis[(3R)-3-hydroxyacyl]-alpha-D-glucosamine + holo-[ACP] + H(+). The protein operates within bacterial outer membrane biogenesis; LPS lipid A biosynthesis. Its function is as follows. Catalyzes the N-acylation of UDP-3-O-acylglucosamine using 3-hydroxyacyl-ACP as the acyl donor. Is involved in the biosynthesis of lipid A, a phosphorylated glycolipid that anchors the lipopolysaccharide to the outer membrane of the cell. This chain is UDP-3-O-acylglucosamine N-acyltransferase, found in Anaeromyxobacter sp. (strain K).